A 322-amino-acid polypeptide reads, in one-letter code: Glycerate dehydrogenase (322 aa).

Residues 158 to 159 (SI), Asp178, 239 to 241 (TAR), and Asp265 each bind NAD(+). The active site involves Arg241. Residue Glu270 is part of the active site. His288 serves as the catalytic Proton donor. 288–291 (HIGS) lines the NAD(+) pocket.

Belongs to the D-isomer specific 2-hydroxyacid dehydrogenase family. As to quaternary structure, homodimer.

It catalyses the reaction (R)-glycerate + NAD(+) = 3-hydroxypyruvate + NADH + H(+). It participates in one-carbon metabolism; formaldehyde assimilation via serine pathway. Functionally, active on hydroxypyruvate and glyoxylate. This Hyphomicrobium methylovorum protein is Glycerate dehydrogenase.